A 251-amino-acid polypeptide reads, in one-letter code: NADH-quinone oxidoreductase subunit C (251 aa).

Residues 1-34 (MSDANNTAGDANEVNPEKDLSAENLPGQRGQGGE) are disordered.

The protein belongs to the complex I 30 kDa subunit family. As to quaternary structure, NDH-1 is composed of 14 different subunits. Subunits NuoB, C, D, E, F, and G constitute the peripheral sector of the complex.

The protein resides in the cell membrane. It catalyses the reaction a quinone + NADH + 5 H(+)(in) = a quinol + NAD(+) + 4 H(+)(out). Its function is as follows. NDH-1 shuttles electrons from NADH, via FMN and iron-sulfur (Fe-S) centers, to quinones in the respiratory chain. The immediate electron acceptor for the enzyme in this species is believed to be a menaquinone. Couples the redox reaction to proton translocation (for every two electrons transferred, four hydrogen ions are translocated across the cytoplasmic membrane), and thus conserves the redox energy in a proton gradient. The sequence is that of NADH-quinone oxidoreductase subunit C from Streptomyces coelicolor (strain ATCC BAA-471 / A3(2) / M145).